A 273-amino-acid chain; its full sequence is Undecaprenyl-diphosphatase (273 aa).

7 consecutive transmembrane segments (helical) span residues 6–26 (SLLI…LPVS), 45–65 (AKTF…VMFW), 90–110 (LTLI…LVFH), 116–136 (LFNP…LIAA), 190–210 (YAAS…ATVL), 222–242 (ADIP…LIAI), and 252–272 (ISFI…YVVF).

This sequence belongs to the UppP family.

The protein resides in the cell inner membrane. It carries out the reaction di-trans,octa-cis-undecaprenyl diphosphate + H2O = di-trans,octa-cis-undecaprenyl phosphate + phosphate + H(+). In terms of biological role, catalyzes the dephosphorylation of undecaprenyl diphosphate (UPP). Confers resistance to bacitracin. The sequence is that of Undecaprenyl-diphosphatase from Salmonella arizonae (strain ATCC BAA-731 / CDC346-86 / RSK2980).